We begin with the raw amino-acid sequence, 93 residues long: UPF0473 protein YrzB (93 aa).

Belongs to the UPF0473 family.

In Bacillus subtilis (strain 168), this protein is UPF0473 protein YrzB (yrzB).